A 503-amino-acid chain; its full sequence is Betaine aldehyde dehydrogenase 2 (503 aa).

161–170 (WNYPLLMATW) lines the betaine aldehyde pocket. 238–243 (GSYETG) is an NAD(+) binding site. Residues glutamate 260, 292–295 (QICS), and cysteine 453 contribute to the betaine aldehyde site. Residues glutamate 260 and cysteine 294 contribute to the active site. Residues 260–261 (EL) and cysteine 294 contribute to the 4-aminobutanal site. Tryptophan 459 is a 4-aminobutanal binding site. The short motif at 501 to 503 (SKL) is the Microbody targeting signal element.

The protein belongs to the aldehyde dehydrogenase family. As to quaternary structure, homodimer.

The protein localises to the peroxisome. Its subcellular location is the cytoplasm. The catalysed reaction is betaine aldehyde + NAD(+) + H2O = glycine betaine + NADH + 2 H(+). It participates in amine and polyamine biosynthesis; betaine biosynthesis via choline pathway; betaine from betaine aldehyde: step 1/1. Its function is as follows. Dehydrogenase that can use N-acetyl-c-aminobutyraldehyde (NAGABald), gamma-guanidinobutyraldehyde (GGBald), betaine aldehyde (Bet-ald), gamma-aminobutyraldehyde (GAB-ald), acetaldehyde, 4-aminobutylaldehyde (AB-ald), 3-aminopropionaldehyde (AP-ald), 4-N-trimethylaminobutyraldehyde (TMAB-ald) and 3-N-trimethylaminopropionaldehyde (TMAP-ald) as substrates. Catalyzes the oxidation of GAB-ald more efficiently than Bet-ald. Mediates the conversion of GAB-ald into gamma-aminobutyric acid (GABA), and prevents the formation of 2-acetyl-1-pyrroline (2AP) which gives fragrant rice its aromatic properties. The chain is Betaine aldehyde dehydrogenase 2 (BADH2) from Oryza sativa subsp. indica (Rice).